The sequence spans 384 residues: Na(+)/H(+) antiporter NhaA (384 aa).

The next 11 membrane-spanning stretches (helical) occupy residues 17–37 (SGLFLISCTLFSLVIANSAIA), 53–73 (LEYWINDGLMTIFFLLIGLEL), 89–109 (MLPIFGAIGGMIVPAGLFLVM), 118–138 (GAGIPMATDIAFALAILSLLG), 147–167 (IFLTALAVIDDLGAILIIAVF), 171–191 (TLLWTNLCIALGIFGFLLILN), 198–218 (LIPYLIGGVFMWYFMLHSGVH), 251–271 (PVAFFILPLFALANTAIVLSS), 283–303 (IGIALGLIIGKPLGIFLLSML), 321–341 (ILAVGFLGGIGFTMSIFITLL), and 354–374 (FVILISSLIAGIIGYFSLKYV).

This sequence belongs to the NhaA Na(+)/H(+) (TC 2.A.33) antiporter family.

The protein localises to the cell inner membrane. The catalysed reaction is Na(+)(in) + 2 H(+)(out) = Na(+)(out) + 2 H(+)(in). Its function is as follows. Na(+)/H(+) antiporter that extrudes sodium in exchange for external protons. The chain is Na(+)/H(+) antiporter NhaA from Flavobacterium psychrophilum (strain ATCC 49511 / DSM 21280 / CIP 103535 / JIP02/86).